Consider the following 367-residue polypeptide: Peptide chain release factor 2 (367 aa).

Q254 is subject to N5-methylglutamine.

The protein belongs to the prokaryotic/mitochondrial release factor family. Post-translationally, methylated by PrmC. Methylation increases the termination efficiency of RF2.

Its subcellular location is the cytoplasm. Peptide chain release factor 2 directs the termination of translation in response to the peptide chain termination codons UGA and UAA. This is Peptide chain release factor 2 from Burkholderia cenocepacia (strain ATCC BAA-245 / DSM 16553 / LMG 16656 / NCTC 13227 / J2315 / CF5610) (Burkholderia cepacia (strain J2315)).